The primary structure comprises 35 residues: Dolichyl-diphosphooligosaccharide--protein glycosyltransferase subunit 4B (35 aa).

Over 1-8 (MFDDQDLG) the chain is Lumenal. Residues 9–29 (FFANFLGIFIFIMVIAYHFVV) form a helical membrane-spanning segment. Residues 30 to 35 (AEPKFE) lie on the Cytoplasmic side of the membrane.

It belongs to the OST4 family. As to quaternary structure, component of the oligosaccharyltransferase (OST) complex.

The protein resides in the endoplasmic reticulum membrane. In terms of biological role, subunit of the oligosaccharyl transferase (OST) complex that catalyzes the initial transfer of a defined glycan (Glc(3)Man(9)GlcNAc(2) in eukaryotes) from the lipid carrier dolichol-pyrophosphate to an asparagine residue within an Asn-X-Ser/Thr consensus motif in nascent polypeptide chains, the first step in protein N-glycosylation. N-glycosylation occurs cotranslationally and the complex associates with the Sec61 complex at the channel-forming translocon complex that mediates protein translocation across the endoplasmic reticulum (ER). All subunits are required for a maximal enzyme activity. This Arabidopsis thaliana (Mouse-ear cress) protein is Dolichyl-diphosphooligosaccharide--protein glycosyltransferase subunit 4B (OST4B).